Consider the following 382-residue polypeptide: MYIAGVMSGTSLDGIDVALVRIEGSGVDSKVKLIHFTTVPFRNDIKSEIQQALSIENSNVQLICSLNFKLGLCFANAVKEVCKEANFSLEQLDLIGSHGQTIYHQPKPEGNMIASTLQIGEPAVIAYDTNTTVISNFRTMDMAAGGQGAPLVPYSEVILYRDPSKNRLLQNIGGIGNVTVIPSQKSDQNVIAFDTGPGNMIIDEVCQRLFQLPYDQNGEIAEQGEVVDEILTYCMNHPFLKMNPPKSTGREQFGEEFVSQLLKRYEKYSKENILTTVTMFTASSIVHHYKGFILPYYEIDEVILGGGGSYNDTLVEMIRYGLKDEKCTIFIQEDIGYSSEAKEAIAFAILANETYHRNPSNVPSATGAKKSVVLGNVTYPSI.

9–16 (GTSLDGID) contributes to the ATP binding site.

The protein belongs to the anhydro-N-acetylmuramic acid kinase family.

It carries out the reaction 1,6-anhydro-N-acetyl-beta-muramate + ATP + H2O = N-acetyl-D-muramate 6-phosphate + ADP + H(+). It functions in the pathway amino-sugar metabolism; 1,6-anhydro-N-acetylmuramate degradation. Its pathway is cell wall biogenesis; peptidoglycan recycling. In terms of biological role, catalyzes the specific phosphorylation of 1,6-anhydro-N-acetylmuramic acid (anhMurNAc) with the simultaneous cleavage of the 1,6-anhydro ring, generating MurNAc-6-P. Is required for the utilization of anhMurNAc either imported from the medium or derived from its own cell wall murein, and thus plays a role in cell wall recycling. This Bacillus cereus (strain Q1) protein is Anhydro-N-acetylmuramic acid kinase.